The primary structure comprises 1272 residues: RING finger protein PFE0100w (1272 aa).

Residues 216-260 (INKINDVSNNDPKKDNNEKNTSSNNITHNNYNDISNNNNNNNNIN) are disordered. The span at 234–260 (KNTSSNNITHNNYNDISNNNNNNNNIN) shows a compositional bias: low complexity. One copy of the CHCR repeat lies at 608–752 (YIQTINYLET…GYKFIKYYPQ (145 aa)). A helical membrane pass occupies residues 771 to 791 (IFIPLFLDNIDFLFMFIVKFL). Disordered regions lie at residues 842–862 (NQNHNGIPSDSHNLSDDNNSQ) and 908–970 (ENQT…IINK). Composition is skewed to low complexity over residues 850 to 861 (SDSHNLSDDNNS) and 909 to 956 (NQTN…IQTN). A compositionally biased stretch (polar residues) spans 957–967 (KQKGNSTTNKI). Positions 1146 to 1182 (MNDMNKNINDKCIEIEKDKKELEKIKKKQLKKKYNFY) form a coiled coil. The segment at 1189 to 1224 (CSICKEILSVPMIHFLCKHSYHSYCLKDNNVCILCH) adopts an RING-type; atypical zinc-finger fold.

The protein resides in the membrane. The sequence is that of RING finger protein PFE0100w from Plasmodium falciparum (isolate 3D7).